The following is a 121-amino-acid chain: Large ribosomal subunit protein uL22 (121 aa).

The protein belongs to the universal ribosomal protein uL22 family. Part of the 50S ribosomal subunit.

In terms of biological role, this protein binds specifically to 23S rRNA; its binding is stimulated by other ribosomal proteins, e.g. L4, L17, and L20. It is important during the early stages of 50S assembly. It makes multiple contacts with different domains of the 23S rRNA in the assembled 50S subunit and ribosome. Functionally, the globular domain of the protein is located near the polypeptide exit tunnel on the outside of the subunit, while an extended beta-hairpin is found that lines the wall of the exit tunnel in the center of the 70S ribosome. This is Large ribosomal subunit protein uL22 from Salinibacter ruber (strain DSM 13855 / M31).